Here is a 194-residue protein sequence, read N- to C-terminus: Large ribosomal subunit protein eL15 (194 aa).

The segment at 160–194 (RGLTSAGKKGRGLMYKGKGTEKVRPSVRANSKKAK) is disordered.

Belongs to the eukaryotic ribosomal protein eL15 family.

In Methanococcus maripaludis (strain C7 / ATCC BAA-1331), this protein is Large ribosomal subunit protein eL15.